The following is a 219-amino-acid chain: Large ribosomal subunit protein uL1 (219 aa).

Belongs to the universal ribosomal protein uL1 family. Part of the 50S ribosomal subunit.

Functionally, binds directly to 23S rRNA. Probably involved in E site tRNA release. In terms of biological role, protein L1 is also a translational repressor protein, it controls the translation of its operon by binding to its mRNA. In Pyrococcus horikoshii (strain ATCC 700860 / DSM 12428 / JCM 9974 / NBRC 100139 / OT-3), this protein is Large ribosomal subunit protein uL1.